The following is a 1272-amino-acid chain: Fused isobutyryl-CoA mutase (1272 aa).

In terms of domain architecture, B12-binding spans 20 to 158 (RLRFVTAAAL…ARCAEGARAA (139 aa)). His33 contacts adenosylcob(III)alamin. The GTPase chaperone MeaI stretch occupies residues 163–536 (ESQVGAWAAE…YRHVAEALRK (374 aa)). Positions 193-240 (GAVARNPSSEASRVAAAGRGDHLDRGVRAASTADTADTANTANTANTA) are disordered. Over residues 221–240 (AASTADTADTANTANTANTA) the composition is skewed to low complexity. 334–339 (GAGKSS) contacts GTP. Positions 338, 363, 364, and 377 each coordinate Mg(2+). Position 380 (Arg380) interacts with GTP. Residues Glu429 and Thr430 each contribute to the Mg(2+) site. 476–479 (NKFD) is a GTP binding site. The segment at 537–758 (HGLRSGGGRL…MLDNLPGYFP (222 aa)) is linker. Low complexity-rich tracts occupy residues 614–631 (TVAT…KANA) and 639–663 (ANAS…ATPT). Residues 614–667 (TVATSASPGASASSKANACTSTSSKANASPGANTTANSNASATSGTATPTDALN) are disordered. 7 residues coordinate substrate: Phe766, Arg801, Arg907, Tyr951, Ser1000, Arg1035, and Lys1040. Positions 1152 and 1271 each coordinate GTP.

This sequence belongs to the IcmF family. Homodimer. Requires adenosylcob(III)alamin as cofactor. The cofactor is Mg(2+).

It catalyses the reaction 2-methylpropanoyl-CoA = butanoyl-CoA. It carries out the reaction GTP + H2O = GDP + phosphate + H(+). In terms of biological role, catalyzes the reversible interconversion of isobutyryl-CoA and n-butyryl-CoA, using radical chemistry. Also exhibits GTPase activity, associated with its G-protein domain (MeaI) that functions as a chaperone that assists cofactor delivery and proper holo-enzyme assembly. Does not exhibit methylmalonyl-CoA mutase (MCM) activity. This chain is Fused isobutyryl-CoA mutase, found in Paraburkholderia xenovorans (strain LB400).